We begin with the raw amino-acid sequence, 692 residues long: Elongation factor G (692 aa).

The tr-type G domain maps to Glu8–Leu283. GTP is bound by residues Ala17–Thr24, Asp81–His85, and Asn135–Asp138.

The protein belongs to the TRAFAC class translation factor GTPase superfamily. Classic translation factor GTPase family. EF-G/EF-2 subfamily.

The protein resides in the cytoplasm. Catalyzes the GTP-dependent ribosomal translocation step during translation elongation. During this step, the ribosome changes from the pre-translocational (PRE) to the post-translocational (POST) state as the newly formed A-site-bound peptidyl-tRNA and P-site-bound deacylated tRNA move to the P and E sites, respectively. Catalyzes the coordinated movement of the two tRNA molecules, the mRNA and conformational changes in the ribosome. The chain is Elongation factor G from Caulobacter sp. (strain K31).